Consider the following 544-residue polypeptide: Chaperonin GroEL 2 (544 aa).

ATP contacts are provided by residues 29–32 (TLGP), 86–90 (DGTTT), Gly413, 479–481 (NAA), and Asp495.

This sequence belongs to the chaperonin (HSP60) family. Forms a cylinder of 14 subunits composed of two heptameric rings stacked back-to-back. Interacts with the co-chaperonin GroES.

The protein localises to the cytoplasm. It catalyses the reaction ATP + H2O + a folded polypeptide = ADP + phosphate + an unfolded polypeptide.. Functionally, together with its co-chaperonin GroES, plays an essential role in assisting protein folding. The GroEL-GroES system forms a nano-cage that allows encapsulation of the non-native substrate proteins and provides a physical environment optimized to promote and accelerate protein folding. This is Chaperonin GroEL 2 from Prochlorococcus marinus subsp. pastoris (strain CCMP1986 / NIES-2087 / MED4).